Reading from the N-terminus, the 355-residue chain is Small ribosomal subunit protein uS2 (355 aa).

The protein belongs to the universal ribosomal protein uS2 family.

The protein is Small ribosomal subunit protein uS2 of Methylorubrum extorquens (strain CM4 / NCIMB 13688) (Methylobacterium extorquens).